The primary structure comprises 533 residues: GDP-fucose protein O-fucosyltransferase 4 (533 aa).

Over 1 to 20 (MSAGCTQLVWGGRLHWGASH) the chain is Cytoplasmic. Residues 21 to 37 (LLSCLLALCALWVLAAA) traverse the membrane as a helical; Signal-anchor for type II membrane protein segment. Over 38-533 (EPTEGGSANV…ETYIKRSMNH (496 aa)) the chain is Lumenal. N-linked (GlcNAc...) asparagine glycosylation is found at Asn148, Asn206, and Asn358. A disulfide bond links Cys429 and Cys432. Residue Asn511 is glycosylated (N-linked (GlcNAc...) asparagine).

The protein belongs to the glycosyltransferase 10 family.

The protein resides in the endoplasmic reticulum membrane. The catalysed reaction is L-threonyl-[protein] + GDP-beta-L-fucose = 3-O-(alpha-L-fucosyl)-L-threonyl-[protein] + GDP + H(+). The enzyme catalyses L-seryl-[protein] + GDP-beta-L-fucose = 3-O-(alpha-L-fucosyl)-L-seryl-[protein] + GDP + H(+). Its pathway is protein modification; protein glycosylation. Functionally, protein O-fucosyltransferase that specifically catalyzes O-fucosylation of serine or threonine residues in EMI domains of target proteins. Attaches fucose through an O-glycosidic linkage. O-fucosylation of EMI domain-containing proteins may be required for facilitating protein folding and secretion. The polypeptide is GDP-fucose protein O-fucosyltransferase 4 (fut11) (Xenopus tropicalis (Western clawed frog)).